Reading from the N-terminus, the 75-residue chain is MATVVRLTRIGRKKSPFYRIVVTDSRKRRDSGFIETIGYYNPRMEEELKFDADRLAYWKKVGAKVSDRVAKITSK.

It belongs to the bacterial ribosomal protein bS16 family.

This is Small ribosomal subunit protein bS16 from Campylobacter hominis (strain ATCC BAA-381 / DSM 21671 / CCUG 45161 / LMG 19568 / NCTC 13146 / CH001A).